A 213-amino-acid polypeptide reads, in one-letter code: Large ribosomal subunit protein uL1 (213 aa).

Belongs to the universal ribosomal protein uL1 family. Part of the 50S ribosomal subunit.

In terms of biological role, binds directly to 23S rRNA. Probably involved in E site tRNA release. Its function is as follows. Protein L1 is also a translational repressor protein, it controls the translation of its operon by binding to its mRNA. The polypeptide is Large ribosomal subunit protein uL1 (Methanococcus maripaludis (strain C5 / ATCC BAA-1333)).